The chain runs to 93 residues: Small ribosomal subunit protein bS18 (93 aa).

Belongs to the bacterial ribosomal protein bS18 family. Part of the 30S ribosomal subunit. Forms a tight heterodimer with protein bS6.

Functionally, binds as a heterodimer with protein bS6 to the central domain of the 16S rRNA, where it helps stabilize the platform of the 30S subunit. In Acidovorax ebreus (strain TPSY) (Diaphorobacter sp. (strain TPSY)), this protein is Small ribosomal subunit protein bS18.